The following is a 238-amino-acid chain: Probable transcriptional regulatory protein SGO_0454 (238 aa).

The protein belongs to the TACO1 family. YeeN subfamily.

The protein localises to the cytoplasm. The protein is Probable transcriptional regulatory protein SGO_0454 of Streptococcus gordonii (strain Challis / ATCC 35105 / BCRC 15272 / CH1 / DL1 / V288).